The primary structure comprises 160 residues: MSDSPATAHTRLELPIDIIKIQALLPHRYPFLLVDRILELDQKQKRIVAQKNVSINEPFFQGHFPEHPVMPGVLIIEALAQAGGVMTQLDLSHNGHSSLLFYMVRVDNARFNKQVVPGDILILDMTMKRRIRNMGCYYGEARVNGEVVACADIMCAGVRS.

The active site involves histidine 63.

The protein belongs to the thioester dehydratase family. FabZ subfamily.

The protein localises to the cytoplasm. The enzyme catalyses a (3R)-hydroxyacyl-[ACP] = a (2E)-enoyl-[ACP] + H2O. In terms of biological role, involved in unsaturated fatty acids biosynthesis. Catalyzes the dehydration of short chain beta-hydroxyacyl-ACPs and long chain saturated and unsaturated beta-hydroxyacyl-ACPs. The polypeptide is 3-hydroxyacyl-[acyl-carrier-protein] dehydratase FabZ (Xylella fastidiosa (strain M12)).